A 623-amino-acid polypeptide reads, in one-letter code: GATA zinc finger domain-containing protein 6 (623 aa).

Disordered stretches follow at residues 137–156 (IISP…GNNF), 167–197 (INNN…TAST), and 245–289 (PTTT…TAST). Positions 167-179 (INNNSNNNNNNNN) are enriched in low complexity. Residues 185 to 197 (KQQTSKGSATAST) are compositionally biased toward polar residues. Residues 320 to 345 (CHSCGETQTSQWRRGPDGCKSLCNAC) form a GATA-type zinc finger. Residues 398–509 (IQQQQQKDDH…SINHNDKLIN (112 aa)) are disordered. Residues 410 to 482 (LSRPSSFSSQ…TSPTISSESL (73 aa)) show a composition bias toward low complexity. A compositionally biased stretch (polar residues) spans 483–502 (NFSSATNTPTNLSPNLQSIN).

The protein is GATA zinc finger domain-containing protein 6 (gtaF) of Dictyostelium discoideum (Social amoeba).